We begin with the raw amino-acid sequence, 427 residues long: Glutamate-1-semialdehyde 2,1-aminomutase (427 aa).

Lys-265 carries the N6-(pyridoxal phosphate)lysine modification.

The protein belongs to the class-III pyridoxal-phosphate-dependent aminotransferase family. HemL subfamily. In terms of assembly, homodimer. Pyridoxal 5'-phosphate serves as cofactor.

Its subcellular location is the cytoplasm. The enzyme catalyses (S)-4-amino-5-oxopentanoate = 5-aminolevulinate. It functions in the pathway porphyrin-containing compound metabolism; protoporphyrin-IX biosynthesis; 5-aminolevulinate from L-glutamyl-tRNA(Glu): step 2/2. The sequence is that of Glutamate-1-semialdehyde 2,1-aminomutase from Bordetella pertussis (strain Tohama I / ATCC BAA-589 / NCTC 13251).